We begin with the raw amino-acid sequence, 431 residues long: Chaperone SurA (431 aa).

The signal sequence occupies residues 1 to 22; sequence MNLKKLLTSAVLSISLCQSAFA. PpiC domains follow at residues 173-274 and 283-383; these read AEEY…KVQD and TTET…QLLD.

The protein resides in the periplasm. It catalyses the reaction [protein]-peptidylproline (omega=180) = [protein]-peptidylproline (omega=0). Chaperone involved in the correct folding and assembly of outer membrane proteins. Recognizes specific patterns of aromatic residues and the orientation of their side chains, which are found more frequently in integral outer membrane proteins. May act in both early periplasmic and late outer membrane-associated steps of protein maturation. The chain is Chaperone SurA from Pseudoalteromonas translucida (strain TAC 125).